Consider the following 886-residue polypeptide: Chitin synthase 3 (886 aa).

2 disordered regions span residues 1-70 and 86-138; these read MQQG…YQTD and PYEP…AGGG. The segment covering 7 to 17 has biased composition (basic and acidic residues); the sequence is LDDRPYGRPEQ. A compositionally biased stretch (polar residues) spans 37-56; it reads PSDQLQLNAAQSVDNLSRNS. A glycan (N-linked (GlcNAc...) asparagine) is linked at asparagine 51. Over residues 106–122 the composition is skewed to basic and acidic residues; sequence YDHDDLRPMLPHQDSHA. A glycan (N-linked (GlcNAc...) asparagine) is linked at asparagine 196. 7 consecutive transmembrane segments (helical) span residues 428–448, 526–546, 556–576, 602–622, 637–657, 683–703, and 712–732; these read SAFG…YVAL, RWLN…YQFF, VMLF…WFAV, ILGV…FVLS, MVYF…FIAV, TLIV…FLMF, and FVQY…YAFC. The interval 745–768 is disordered; sequence DQAEKLPSVSTKDGSGKTDLPDES. The next 2 helical transmembrane spans lie at 813–833 and 858–878; these read VLAW…AAGL and VVLW…MWFL.

This sequence belongs to the chitin synthase family. Class I subfamily.

The protein localises to the cell membrane. It catalyses the reaction [(1-&gt;4)-N-acetyl-beta-D-glucosaminyl](n) + UDP-N-acetyl-alpha-D-glucosamine = [(1-&gt;4)-N-acetyl-beta-D-glucosaminyl](n+1) + UDP + H(+). Polymerizes chitin, a structural polymer of the cell wall and septum, by transferring the sugar moiety of UDP-GlcNAc to the non-reducing end of the growing chitin polymer. Involved in tolerance to hyperosmotic conditions. CHS3 is the only V.dahliae chitin synthase that is not involved in virulence. This is Chitin synthase 3 from Verticillium dahliae (strain VdLs.17 / ATCC MYA-4575 / FGSC 10137) (Verticillium wilt).